A 370-amino-acid chain; its full sequence is Protein TEEBE (370 aa).

The first 21 residues, 1 to 21, serve as a signal peptide directing secretion; it reads MSLYHSLSIFLLLSLCHGSYS. Asparagine 215 carries N-linked (GlcNAc...) asparagine glycosylation.

Expressed in primary and lateral roots, stigmatic papillae and hypocotyls.

Its subcellular location is the secreted. It localises to the cell wall. Functionally, prevents hypocotyl epidermal cells elongation by modulating the pectin status in cell walls. Likely regulates pectin methylesterification degree during cell separation and elongation, including upon root-knot nematode Meloidogyne incognita infection. This is Protein TEEBE from Arabidopsis thaliana (Mouse-ear cress).